A 210-amino-acid chain; its full sequence is Frataxin, mitochondrial (210 aa).

The N-terminal 41 residues, 1 to 41 (MWTFGRRAVAGLLASPSPAQAQTLARAPRLAELAQLCSRRG), are a transit peptide targeting the mitochondrion.

The protein belongs to the frataxin family. As to quaternary structure, component of the mitochondrial core iron-sulfur cluster (ISC) complex composed of NFS1, LYRM4, NDUFAB1, ISCU, FXN, and FDX2; this complex is a heterohexamer containing two copies of each monomer. Homodimer. Monomer (probable predominant form). Oligomer. Monomers and polymeric aggregates of &gt;1 MDa have been isolated from mitochondria. A small fraction of heterologous overexpressed recombinant frataxin forms high-molecular weight aggregates that incorporate iron. Interacts with LYRM4. Interacts (via ferrous form) with ISCU; the interaction is possible when both are bound to the dimeric form of the cysteine desulfurase complex (NFS1:LYRM4) and the interaction enhances FXN interaction to the dimeric form of the cysteine desulfurase complex (NFS1:LYRM4). Interacts with FECH; one iron-bound FXN monomer seems to interact with a FECH homodimer. Interacts with SDHA and SDHB. Interacts with ACO2; the interaction is dependent on citrate. Interacts with HSPA9. Interacts with ACO1. Interacts with ISCU (cytoplasmic form). In terms of processing, processed in two steps by mitochondrial processing peptidase (MPP). MPP first cleaves the precursor to intermediate form and subsequently converts the intermediate to yield frataxin mature form (frataxin(81-210)) which is the predominant form. The additional forms, frataxin(56-210) and frataxin(78-210), seem to be produced when the normal maturation process is impaired; their physiological relevance is unsure.

The protein localises to the mitochondrion. The protein resides in the cytoplasm. It is found in the cytosol. It carries out the reaction 4 Fe(2+) + O2 + 4 H(+) = 4 Fe(3+) + 2 H2O. Functions as an activator of persulfide transfer to the scaffoding protein ISCU as component of the core iron-sulfur cluster (ISC) assembly complex and participates to the [2Fe-2S] cluster assembly. Accelerates sulfur transfer from NFS1 persulfide intermediate to ISCU and to small thiols such as L-cysteine and glutathione leading to persulfuration of these thiols and ultimately sulfide release. Binds ferrous ion and is released from FXN upon the addition of both L-cysteine and reduced FDX2 during [2Fe-2S] cluster assembly. The core iron-sulfur cluster (ISC) assembly complex is involved in the de novo synthesis of a [2Fe-2S] cluster, the first step of the mitochondrial iron-sulfur protein biogenesis. This process is initiated by the cysteine desulfurase complex (NFS1:LYRM4:NDUFAB1) that produces persulfide which is delivered on the scaffold protein ISCU in a FXN-dependent manner. Then this complex is stabilized by FDX2 which provides reducing equivalents to accomplish the [2Fe-2S] cluster assembly. Finally, the [2Fe-2S] cluster is transferred from ISCU to chaperone proteins, including HSCB, HSPA9 and GLRX5. May play a role in the protection against iron-catalyzed oxidative stress through its ability to catalyze the oxidation of Fe(2+) to Fe(3+); the oligomeric form but not the monomeric form has in vitro ferroxidase activity. May be able to store large amounts of iron in the form of a ferrihydrite mineral by oligomerization; however, the physiological relevance is unsure as reports are conflicting and the function has only been shown using heterologous overexpression systems. May function as an iron chaperone protein that protects the aconitase [4Fe-4S]2+ cluster from disassembly and promotes enzyme reactivation. May play a role as a high affinity iron binding partner for FECH that is capable of both delivering iron to ferrochelatase and mediating the terminal step in mitochondrial heme biosynthesis. Its function is as follows. Modulates the RNA-binding activity of ACO1. May be involved in the cytoplasmic iron-sulfur protein biogenesis. May contribute to oxidative stress resistance and overall cell survival. This is Frataxin, mitochondrial from Macaca fascicularis (Crab-eating macaque).